The sequence spans 500 residues: Hepatic triacylglycerol lipase (500 aa).

The signal sequence occupies residues 1 to 21; that stretch reads MENPLCVSIFLFYCILIQSSA. Positions 23–44 are disordered; it reads GQSLGPESFGRRSRAAETNKTP. N-linked (GlcNAc...) asparagine glycans are attached at residues asparagine 67 and asparagine 78. Serine 168 functions as the Nucleophile in the catalytic mechanism. The Charge relay system role is filled by aspartate 194. The tract at residues 254-277 is essential for determining substrate specificity; it reads CHFLELYKHFAKHGLNAITRTVKC. Catalysis depends on histidine 279, which acts as the Charge relay system. The 135-residue stretch at 353 to 487 folds into the PLAT domain; it reads YHYQFKIRFI…HPAREKTFVR (135 aa). N-linked (GlcNAc...) asparagine glycosylation is found at asparagine 363 and asparagine 398.

Belongs to the AB hydrolase superfamily. Lipase family. Homodimer.

It is found in the secreted. The enzyme catalyses a triacylglycerol + H2O = a diacylglycerol + a fatty acid + H(+). It carries out the reaction a 1-acyl-sn-glycero-3-phosphocholine + H2O = sn-glycerol 3-phosphocholine + a fatty acid + H(+). It catalyses the reaction a 1,2-diacyl-sn-glycero-3-phosphocholine + H2O = a 2-acyl-sn-glycero-3-phosphocholine + a fatty acid + H(+). The catalysed reaction is 1,2,3-tri-(9Z-octadecenoyl)-glycerol + H2O = di-(9Z)-octadecenoylglycerol + (9Z)-octadecenoate + H(+). The enzyme catalyses 1,2-di-(9Z-octadecenoyl)-sn-glycero-3-phosphocholine + H2O = (9Z-octadecenoyl)-sn-glycero-3-phosphocholine + (9Z)-octadecenoate + H(+). It carries out the reaction 1,2,3-tributanoylglycerol + H2O = dibutanoylglycerol + butanoate + H(+). It catalyses the reaction 1,2-dihexadecanoyl-sn-glycero-3-phosphocholine + H2O = hexadecanoyl-sn-glycero-3-phosphocholine + hexadecanoate + H(+). The catalysed reaction is 1,2-di-(9Z-octadecenoyl)-sn-glycerol + H2O = 2-(9Z-octadecenoyl)-glycerol + (9Z)-octadecenoate + H(+). The enzyme catalyses 1,2,3-tri-(9Z-octadecenoyl)-glycerol + H2O = 2,3-di-(9Z)-octadecenoyl-sn-glycerol + (9Z)-octadecenoate + H(+). It carries out the reaction 1-(9Z-octadecenoyl)-sn-glycero-3-phospho-L-serine + H2O = sn-glycero-3-phospho-L-serine + (9Z)-octadecenoate + H(+). It catalyses the reaction 1-hexadecanoyl-sn-glycero-3-phosphocholine + H2O = sn-glycerol 3-phosphocholine + hexadecanoate + H(+). The catalysed reaction is 1,3-di-(9Z-octadecenoyl)-glycerol + H2O = 3-(9Z-octadecenoyl)-sn-glycerol + (9Z)-octadecenoate + H(+). Its function is as follows. Catalyzes the hydrolysis of triglycerides and phospholipids present in circulating plasma lipoproteins, including chylomicrons, intermediate density lipoproteins (IDL), low density lipoproteins (LDL) of large size and high density lipoproteins (HDL), releasing free fatty acids (FFA) and smaller lipoprotein particles. Also exhibits lysophospholipase activity. Can hydrolyze both neutral lipid and phospholipid substrates but shows a greater binding affinity for neutral lipid substrates than phospholipid substrates. In native LDL, preferentially hydrolyzes the phosphatidylcholine species containing polyunsaturated fatty acids at sn-2 position. This Bos taurus (Bovine) protein is Hepatic triacylglycerol lipase (LIPC).